A 103-amino-acid polypeptide reads, in one-letter code: N(4)-acetylcytidine amidohydrolase (103 aa).

The region spanning 6–94 (ITFFQRFQDD…IAGIYPDQTQ (89 aa)) is the ASCH domain. Lys-21 acts as the Proton acceptor in catalysis. The Nucleophile role is filled by Thr-24. Glu-74 serves as the catalytic Proton donor.

This sequence belongs to the N(4)-acetylcytidine amidohydrolase family.

The enzyme catalyses N(4)-acetylcytidine + H2O = cytidine + acetate + H(+). It catalyses the reaction N(4)-acetyl-2'-deoxycytidine + H2O = 2'-deoxycytidine + acetate + H(+). The catalysed reaction is N(4)-acetylcytosine + H2O = cytosine + acetate + H(+). In terms of biological role, catalyzes the hydrolysis of N(4)-acetylcytidine (ac4C). This Citrobacter koseri (strain ATCC BAA-895 / CDC 4225-83 / SGSC4696) protein is N(4)-acetylcytidine amidohydrolase.